A 295-amino-acid polypeptide reads, in one-letter code: Bifunctional protein FolD (295 aa).

Residues 169-171 (GRS), Ser-194, and Ile-235 contribute to the NADP(+) site.

Belongs to the tetrahydrofolate dehydrogenase/cyclohydrolase family. In terms of assembly, homodimer.

The enzyme catalyses (6R)-5,10-methylene-5,6,7,8-tetrahydrofolate + NADP(+) = (6R)-5,10-methenyltetrahydrofolate + NADPH. It catalyses the reaction (6R)-5,10-methenyltetrahydrofolate + H2O = (6R)-10-formyltetrahydrofolate + H(+). It functions in the pathway one-carbon metabolism; tetrahydrofolate interconversion. Functionally, catalyzes the oxidation of 5,10-methylenetetrahydrofolate to 5,10-methenyltetrahydrofolate and then the hydrolysis of 5,10-methenyltetrahydrofolate to 10-formyltetrahydrofolate. The sequence is that of Bifunctional protein FolD from Acaryochloris marina (strain MBIC 11017).